The chain runs to 279 residues: Large ribosomal subunit protein mL46 (279 aa).

At Lys-230 the chain carries N6-acetyllysine.

Belongs to the mitochondrion-specific ribosomal protein mL46 family. As to quaternary structure, component of the mitochondrial ribosome large subunit (39S) which comprises a 16S rRNA and about 50 distinct proteins.

The protein localises to the mitochondrion. This chain is Large ribosomal subunit protein mL46 (MRPL46), found in Pongo abelii (Sumatran orangutan).